The sequence spans 149 residues: D-aminoacyl-tRNA deacylase (149 aa).

A Gly-cisPro motif, important for rejection of L-amino acids motif is present at residues 137–138 (GP).

It belongs to the DTD family. In terms of assembly, homodimer.

Its subcellular location is the cytoplasm. The catalysed reaction is glycyl-tRNA(Ala) + H2O = tRNA(Ala) + glycine + H(+). It carries out the reaction a D-aminoacyl-tRNA + H2O = a tRNA + a D-alpha-amino acid + H(+). An aminoacyl-tRNA editing enzyme that deacylates mischarged D-aminoacyl-tRNAs. Also deacylates mischarged glycyl-tRNA(Ala), protecting cells against glycine mischarging by AlaRS. Acts via tRNA-based rather than protein-based catalysis; rejects L-amino acids rather than detecting D-amino acids in the active site. By recycling D-aminoacyl-tRNA to D-amino acids and free tRNA molecules, this enzyme counteracts the toxicity associated with the formation of D-aminoacyl-tRNA entities in vivo and helps enforce protein L-homochirality. The sequence is that of D-aminoacyl-tRNA deacylase from Thermoanaerobacter pseudethanolicus (strain ATCC 33223 / 39E) (Clostridium thermohydrosulfuricum).